The primary structure comprises 265 residues: Short-chain dehydrogenase/reductase fsr5 (265 aa).

The first 32 residues, 1-32, serve as a signal peptide directing secretion; it reads MASLGKYVSKLAGSRVLVIGGSSGIGFGVAEA. Ser-22, Ser-23, Ile-25, Ser-45, and Lys-50 together coordinate NADP(+). Residue Asn-62 is glycosylated (N-linked (GlcNAc...) asparagine). Residues Asn-88, Arg-130, and Thr-204 each contribute to the NADP(+) site. N-linked (GlcNAc...) asparagine glycosylation is found at Asn-218 and Asn-250.

Belongs to the short-chain dehydrogenases/reductases (SDR) family.

Functionally, short-chain dehydrogenase/reductase; part of the gene cluster that mediates the biosynthesis of fusarubins, highly pigmented naphthoquinones responsible for the coloration of the fruiting bodies. The non-reducing polyketide synthase FSR1 is responsible for the condensation of seven acetyl-CoA units to yield a haptaketide. After rings A and B are formed by aldol-type cyclization, the PKS-derived product is released as 6-O-demethylfusarubinaldehyde. Then, two hydroxyl groups at C-5 and C-10 are incorporated by FSR3, and simultaneously hydroxyl groups at C-6 and C-8 are methylated by FSR2. The aldehyde is, on the one hand, reduced by FSR3 to 8-O-methylfusarubin alcohol, which equilibrates mainly with 8-O-methylfusarubin and only small amounts of 8-O-methylnectriafurone. On the other hand, the aldehyde can be oxidized to form 8-O-methylfusarubinic acid, a reaction driven by FSR3 equilibrating with 8-O-methylfusarubinlactone, finally resulting in 8-O-methylanhydrofusarubinlactol after a further reduction step and loss of water. 8-O-Methylfusarubinic acid can also undergo decarboxylation, resulting in 8-O-methyl-13-hydroxynorjavanicin after another hydroxylation step at C-13. Both steps are most likely also accomplished by FSR3. No enzymatic function has been determined so far for either FSR4 and FSR5. Their deletion does not alter the product spectrum, but the possibility that they catalyze specific enzymatic steps during perithecium development cannot be ruled out. FSR4 might possess a regulatory function in the biosynthesis of fusarubins. This chain is Short-chain dehydrogenase/reductase fsr5, found in Gibberella fujikuroi (strain CBS 195.34 / IMI 58289 / NRRL A-6831) (Bakanae and foot rot disease fungus).